A 237-amino-acid chain; its full sequence is DCN1-like protein 5 (237 aa).

Serine 41 carries the post-translational modification Phosphoserine; by IKKA. Residues 46 to 232 (FSRKKCLAWF…LLDEFVEWQK (187 aa)) enclose the DCUN1 domain.

In terms of assembly, part of a complex that contains DCUN1D5, CUL1 and RBX1; this interaction is bridged by CUL1. Interacts (via the DCUN1 domain) with the unneddylated cullins: interacts with CUL1, CUL2, CUL3, CUL4A, CUL4B and CUL5; these interactions promote the cullin neddylation and the identity of the cullin dictates the affinity of the interaction. Interacts (via DCUN1 domain) with UBE2M (N-terminally acetylated form) and probably with UBE2F (N-terminally acetylated form). May also interact with regulators or subunits of cullin-RING ligases such as RBX1, RNF7, ELOB and DDB1; these interactions are bridged by cullins. Interacts with CAND1; this interaction is bridged by cullins and strongly inhibits the neddylation of cullins. These CAND-cullin-DCNL complexes can only be neddylated in the presence of a substrate adapter. Phosphorylation at Ser-41 is independent of cullin's interaction. Phosphorylated in response to both TICAM1 and MYD88 dependent Toll-like receptor (TLR) pathway activation. Phosphorylated in response to IL1B stimulation. Highly expressed in testis. Lower levels of expression in skin, thymus, spleen, lymph nodes, lung, brain, heart, skeletal muscles, kidney, liver an ovary.

It is found in the nucleus. Its subcellular location is the cytoplasm. It localises to the cytoskeleton. The protein localises to the spindle. In terms of biological role, contributes to the neddylation of all cullins by transferring NEDD8 from N-terminally acetylated NEDD8-conjugating E2s enzyme to different cullin C-terminal domain-RBX complexes which is necessary for the activation of cullin-RING E3 ubiquitin ligases (CRLs). May play a role in DNA damage response and may participate in cell proliferation and anchorage-independent cell growth. This chain is DCN1-like protein 5, found in Mus musculus (Mouse).